Consider the following 1000-residue polypeptide: MPDRGGGPPTGPRIRVGRPSRRVRTLLLTLGVLAVLAMAFTMFAGFWTDWLWYRSVHYSSVFTTTLWTKIGLFFVFGLLMALAVGFNIWLAHRLRPPLSAMSMEQQNLDRYRMGIAPYKKWLLLGITALVGLIAGASASGQWRTWLMWVNGVPFGQKDPQFKLDVSFYAFDLPWYRFLLGFGFAAVIISVIAAALTHYLYGGLRVTSPGARATAAATGHLSVLLGVFVALKAVAYWLDRYGLAVKSSDFKATDNWTGLRYVDANAYLPAKTILFCIAVICALLFFATLWRRTWQLPVIGFGLMVLSAILIGGLYPALVQKFQVQPNEQAKEAPYVEKNLAATRDAYGIEGTQVAEYPGKSETKDKTKLRDDADAAASVRIMDPNIISPTFQQLQQMRNYYAFPTNLDVDRYAKDGKDQDTVIGLRELNLAGIPKKNWINNHFRYTHGYGVVAAKGTQVDSEGRPVFTESNLPSEGDLGKYEQRIYYGEKTTTYSIVGGPQKEIDYSDDTGEKTFSYKGDGGVDLSNPINRAAYAAAFSEPQILYSGAIGDGSRILYNRTPKERVEAVAPWLTIDGDAYPAVVDGRIQWIVDAYTTTNGYPYASRTTLGDTTADSLTANNNSRAVVAQQNQVNYIRNSVKATVDAYSGDVKLYEWDTQDPVLKTWKKAFPGTVQDKGEISKELMAHLRYPQDLFKVQRELLTRYHVKDANTFLSGSEVWQVPDDPTNKSGDAVPPYYLSMKMPDQKAQAFSLTTTFTPNGRDNLSAFMAVDAEAGTSDYGKIRILKLPTSTTVDGPKQVQSQFNSEQDIAESIRLLRGGDSEVEYGNLLTVPLDGGLLYVEPVYVRGGDLKYPLLRKVLVSYGGNTAFENTLDAALNKVFGAQAAETEQPPDEGDDTTEPPPTSTNPTVREALSDAQKAFDAGQKALEQKDLAAYAEAQKDLEEALQRAEDAQAKADQGAGGKNGDDKNAGDKNSGDKAGSDKAGPDATPTGDAGGGADTG.

Transmembrane regions (helical) follow at residues 26 to 48, 70 to 92, 121 to 143, 177 to 199, 220 to 237, 267 to 289, and 296 to 318; these read LLLT…GFWT, IGLF…WLAH, WLLL…GQWR, FLLG…THYL, LSVL…AYWL, LPAK…ATLW, and PVIG…PALV. Disordered regions lie at residues 884 to 908 and 943 to 1000; these read AETE…NPTV and EALQ…ADTG. Acidic residues predominate over residues 888 to 897; that stretch reads QPPDEGDDTT. Composition is skewed to basic and acidic residues over residues 943–953 and 963–984; these read EALQRAEDAQA and NGDD…DKAG.

Belongs to the UPF0182 family.

Its subcellular location is the cell membrane. The sequence is that of UPF0182 protein SCO5204 from Streptomyces coelicolor (strain ATCC BAA-471 / A3(2) / M145).